The sequence spans 656 residues: Kinesin-related protein SMY1 (656 aa).

A Kinesin motor domain is found at histidine 27 to isoleucine 364. Glycine 114–serine 121 provides a ligand contact to ATP. Threonine 583 carries the phosphothreonine modification.

The protein belongs to the TRAFAC class myosin-kinesin ATPase superfamily. Kinesin family.

Its subcellular location is the cytoplasm. It localises to the cytoskeleton. Possible microtubule-based motor that can interact or substitute with myosin 2 (MYO2). This Saccharomyces cerevisiae (strain ATCC 204508 / S288c) (Baker's yeast) protein is Kinesin-related protein SMY1 (SMY1).